The sequence spans 209 residues: Octanoyltransferase (209 aa).

In terms of domain architecture, BPL/LPL catalytic spans 30–209 (DNEPEIVYLV…IQTEFNKIFK (180 aa)). Residues 69–76 (RGGKFTFH), 143–145 (AIG), and 156–158 (GIA) contribute to the substrate site. C174 serves as the catalytic Acyl-thioester intermediate.

It belongs to the LipB family.

It is found in the cytoplasm. It catalyses the reaction octanoyl-[ACP] + L-lysyl-[protein] = N(6)-octanoyl-L-lysyl-[protein] + holo-[ACP] + H(+). It participates in protein modification; protein lipoylation via endogenous pathway; protein N(6)-(lipoyl)lysine from octanoyl-[acyl-carrier-protein]: step 1/2. Catalyzes the transfer of endogenously produced octanoic acid from octanoyl-acyl-carrier-protein onto the lipoyl domains of lipoate-dependent enzymes. Lipoyl-ACP can also act as a substrate although octanoyl-ACP is likely to be the physiological substrate. The chain is Octanoyltransferase from Rickettsia prowazekii (strain Madrid E).